The primary structure comprises 222 residues: N-(5'-phosphoribosyl)anthranilate isomerase (222 aa).

Belongs to the TrpF family.

The enzyme catalyses N-(5-phospho-beta-D-ribosyl)anthranilate = 1-(2-carboxyphenylamino)-1-deoxy-D-ribulose 5-phosphate. Its pathway is amino-acid biosynthesis; L-tryptophan biosynthesis; L-tryptophan from chorismate: step 3/5. The protein is N-(5'-phosphoribosyl)anthranilate isomerase of Rhizobium etli (strain CIAT 652).